A 95-amino-acid polypeptide reads, in one-letter code: FXYD domain-containing ion transport regulator 6 (95 aa).

The signal sequence occupies residues 1–18 (MELVLVFLCSLLAPMVLA). Over 19-35 (STAEKEKEMDPFHYDYQ) the chain is Extracellular. A helical transmembrane segment spans residues 36–58 (TLRIGGLVFAVVLFSVGILLILS). The Cytoplasmic segment spans residues 59-95 (RRCKCSFNQKPRAPGDEEAQVENLITANATEPQKAEN).

The protein belongs to the FXYD family. As to quaternary structure, regulatory subunit of the sodium/potassium-transporting ATPase which is composed of a catalytic alpha subunit, a non-catalytic beta subunit and an additional regulatory subunit. The regulatory subunit, a member of the FXYD protein family, modulates the enzymatic activity in a tissue- and isoform-specific way by changing affinities of the Na+/K+-ATPase toward Na(+), K(+) or ATP.

The protein resides in the cell membrane. Its function is as follows. Associates with and regulates the activity of the sodium/potassium-transporting ATPase (NKA) which catalyzes the hydrolysis of ATP coupled with the exchange of Na(+) and K(+) ions across the plasma membrane. Reduces the apparent affinity for intracellular Na(+) with no change in the apparent affinity for extracellular K(+). In addition to modulating NKA kinetics, may also function as a regulator of NKA localization to the plasma membrane. This Macaca fascicularis (Crab-eating macaque) protein is FXYD domain-containing ion transport regulator 6 (FXYD6).